The sequence spans 237 residues: NAD-dependent protein deacetylase (237 aa).

The region spanning 1 to 237 (MFTTSLRQAQ…LVETNRALQK (237 aa)) is the Deacetylase sirtuin-type domain. The NAD(+) site is built by alanine 18, threonine 22, phenylalanine 29, arginine 30, glutamine 95, aspartate 98, and histidine 113. Residue phenylalanine 29 coordinates nicotinamide. Aspartate 98 provides a ligand contact to nicotinamide. Histidine 113 acts as the Proton acceptor in catalysis. The Zn(2+) site is built by cysteine 121, cysteine 124, cysteine 140, and cysteine 142. 4 residues coordinate NAD(+): serine 180, serine 181, asparagine 205, and isoleucine 224.

It belongs to the sirtuin family. Class U subfamily. Zn(2+) is required as a cofactor.

The protein resides in the cytoplasm. It carries out the reaction N(6)-acetyl-L-lysyl-[protein] + NAD(+) + H2O = 2''-O-acetyl-ADP-D-ribose + nicotinamide + L-lysyl-[protein]. NAD-dependent protein deacetylase which modulates the activities of several enzymes which are inactive in their acetylated form. The polypeptide is NAD-dependent protein deacetylase (Shouchella clausii (strain KSM-K16) (Alkalihalobacillus clausii)).